Consider the following 933-residue polypeptide: Valine--tRNA ligase (933 aa).

The segment at 1-24 is disordered; it reads MIERVKTTKLSEASGLPKTYDPVG. The short motif at 57 to 67 is the 'HIGH' region element; it reads PNVTGSLHMGH. The short motif at 557 to 561 is the 'KMSKS' region element; that stretch reads KMSKS. An ATP-binding site is contributed by lysine 560. Residues 866–932 adopt a coiled-coil conformation; sequence LIDIASLRSR…RLVKERLMGL (67 aa).

The protein belongs to the class-I aminoacyl-tRNA synthetase family. ValS type 1 subfamily. Monomer.

The protein localises to the cytoplasm. The enzyme catalyses tRNA(Val) + L-valine + ATP = L-valyl-tRNA(Val) + AMP + diphosphate. Its function is as follows. Catalyzes the attachment of valine to tRNA(Val). As ValRS can inadvertently accommodate and process structurally similar amino acids such as threonine, to avoid such errors, it has a 'posttransfer' editing activity that hydrolyzes mischarged Thr-tRNA(Val) in a tRNA-dependent manner. The polypeptide is Valine--tRNA ligase (Prochlorococcus marinus (strain NATL2A)).